The following is a 298-amino-acid chain: N-acetylmuramic acid 6-phosphate etherase (298 aa).

The 164-residue stretch at 55 to 218 (IHAQVSGGGR…STGLMIKSGK (164 aa)) folds into the SIS domain. Glu-83 acts as the Proton donor in catalysis. Glu-114 is an active-site residue.

The protein belongs to the GCKR-like family. MurNAc-6-P etherase subfamily. In terms of assembly, homodimer.

It carries out the reaction N-acetyl-D-muramate 6-phosphate + H2O = N-acetyl-D-glucosamine 6-phosphate + (R)-lactate. The protein operates within amino-sugar metabolism; 1,6-anhydro-N-acetylmuramate degradation. Its pathway is amino-sugar metabolism; N-acetylmuramate degradation. It functions in the pathway cell wall biogenesis; peptidoglycan recycling. In terms of biological role, specifically catalyzes the cleavage of the D-lactyl ether substituent of MurNAc 6-phosphate, producing GlcNAc 6-phosphate and D-lactate. Together with AnmK, is also required for the utilization of anhydro-N-acetylmuramic acid (anhMurNAc) either imported from the medium or derived from its own cell wall murein, and thus plays a role in cell wall recycling. The sequence is that of N-acetylmuramic acid 6-phosphate etherase from Escherichia coli (strain SMS-3-5 / SECEC).